Here is a 121-residue protein sequence, read N- to C-terminus: MQKSRNYYRKVKHVRILKKLKSNREDKQKYRIGVYKSLRNFYAYIFDPWKNKVITSVSTLDKSNGYKGNIVSASSLAPDLYKKMKKLNLENESYIFDRSGYLFHGRVKAFANALRDQGVKF.

Belongs to the universal ribosomal protein uL18 family. As to quaternary structure, part of the 50S ribosomal subunit; part of the 5S rRNA/L5/L18/L25 subcomplex. Contacts the 5S and 23S rRNAs.

Functionally, this is one of the proteins that bind and probably mediate the attachment of the 5S RNA into the large ribosomal subunit, where it forms part of the central protuberance. The chain is Large ribosomal subunit protein uL18 from Mesomycoplasma hyopneumoniae (strain 232) (Mycoplasma hyopneumoniae).